We begin with the raw amino-acid sequence, 499 residues long: Lipopolysaccharide core galacturonosyltransferase RgtA (499 aa).

The next 10 membrane-spanning stretches (helical) occupy residues 11–31, 74–94, 103–123, 125–145, 165–185, 199–219, 248–268, 291–311, 316–336, and 351–371; these read TAGLLLAAYFVLNIVLRIVLP, IGALIVPKNILLFLSYLFYGL, EALAAVGMLALITLPQVSYMA, QDLTHTTALLFASSLFLYGFF, IGLISKYNFALMPVVALIAIL, MLAAITVALVIVLPHAVWLQG, LLAFLVAIIAFAALPVVIFAA, MMLASLAGIALIVLFTGSTTV, LDPFLLVLPIYFLAKMQAAGL, and VLMACVLIALGFRVVGAGLIG.

Belongs to the glycosyltransferase 83 family.

It localises to the cell inner membrane. Its pathway is bacterial outer membrane biogenesis; LPS core biosynthesis. Functionally, involved in the modification of the lipopolysaccharide (LPS) inner core. Catalyzes the transfer of a galacturonic acid (GalA) residue to the 4-position of the outer Kdo (3-deoxy-D-manno-octulosonic acid) residue of the LPS inner core, using dodecaprenyl phosphate-GalA as the donor substrate. GalA addition by RgtA is required for RgtB activity. This Rhizobium johnstonii (strain DSM 114642 / LMG 32736 / 3841) (Rhizobium leguminosarum bv. viciae) protein is Lipopolysaccharide core galacturonosyltransferase RgtA.